Consider the following 37-residue polypeptide: Cytochrome b6-f complex subunit 5 (37 aa).

Residues 5-25 (LLSGIVLGLISITSAGLFVTA) traverse the membrane as a helical segment.

The protein belongs to the PetG family. In terms of assembly, the 4 large subunits of the cytochrome b6-f complex are cytochrome b6, subunit IV (17 kDa polypeptide, PetD), cytochrome f and the Rieske protein, while the 4 small subunits are PetG, PetL, PetM and PetN. The complex functions as a dimer.

Its subcellular location is the plastid. It is found in the chloroplast thylakoid membrane. Its function is as follows. Component of the cytochrome b6-f complex, which mediates electron transfer between photosystem II (PSII) and photosystem I (PSI), cyclic electron flow around PSI, and state transitions. PetG is required for either the stability or assembly of the cytochrome b6-f complex. This Psilotum nudum (Whisk fern) protein is Cytochrome b6-f complex subunit 5.